A 389-amino-acid chain; its full sequence is Putative RNA methyltransferase R405 (389 aa).

Positions 207, 261, and 314 each coordinate S-adenosyl-L-methionine. Cys342 (nucleophile) is an active-site residue.

It belongs to the class I-like SAM-binding methyltransferase superfamily. RNA M5U methyltransferase family.

The protein is Putative RNA methyltransferase R405 of Acanthamoeba polyphaga (Amoeba).